Consider the following 166-residue polypeptide: Probable tyrosine-protein phosphatase DG1060 (166 aa).

The region spanning 9–162 (NFGMVADDLY…LVTYNNAPQW (154 aa)) is the Tyrosine-protein phosphatase domain. Cysteine 101 (phosphocysteine intermediate) is an active-site residue.

It belongs to the protein-tyrosine phosphatase family.

It localises to the cytoplasm. The enzyme catalyses O-phospho-L-tyrosyl-[protein] + H2O = L-tyrosyl-[protein] + phosphate. The polypeptide is Probable tyrosine-protein phosphatase DG1060 (DG1060) (Dictyostelium discoideum (Social amoeba)).